The primary structure comprises 132 residues: Galectin-2 (132 aa).

The Galectin domain maps to 4-131 (ELEVKNMDMK…GFNMSSFKLK (128 aa)). Position 65–71 (65–71 (WGQEQRE)) interacts with a beta-D-galactoside.

Homodimer.

This protein binds beta-galactoside. Its physiological function is not yet known. This is Galectin-2 (LGALS2) from Homo sapiens (Human).